We begin with the raw amino-acid sequence, 159 residues long: MNITVISVGKLKEKYLKQGIAEYDKRLSRYCKLNFIEVADEKAPENLSEAEEIMIKDKEGEAILKSIKDGMFVIALDLAGKMLSSEALSEKIDKLALQGNSHITFVIGGSLGLSQGVLKRADFKLCFSPMTFPHQLMKLILLEQVYRAFRISKNEPYHK.

Residues Leu76, Gly108, and 127–132 (FSPMTF) each bind S-adenosyl-L-methionine.

Belongs to the RNA methyltransferase RlmH family. Homodimer.

Its subcellular location is the cytoplasm. It catalyses the reaction pseudouridine(1915) in 23S rRNA + S-adenosyl-L-methionine = N(3)-methylpseudouridine(1915) in 23S rRNA + S-adenosyl-L-homocysteine + H(+). Specifically methylates the pseudouridine at position 1915 (m3Psi1915) in 23S rRNA. The chain is Ribosomal RNA large subunit methyltransferase H from Alkaliphilus metalliredigens (strain QYMF).